A 124-amino-acid chain; its full sequence is Small ribosomal subunit protein uS12 (124 aa).

Disordered stretches follow at residues 9–32 (RKGR…QRRG) and 105–124 (QGVK…KEKS). Positions 108-118 (KNRKQARSRYG) are enriched in basic residues.

This sequence belongs to the universal ribosomal protein uS12 family. As to quaternary structure, part of the 30S ribosomal subunit. Contacts proteins S8 and S17. May interact with IF1 in the 30S initiation complex.

Its function is as follows. With S4 and S5 plays an important role in translational accuracy. In terms of biological role, interacts with and stabilizes bases of the 16S rRNA that are involved in tRNA selection in the A site and with the mRNA backbone. Located at the interface of the 30S and 50S subunits, it traverses the body of the 30S subunit contacting proteins on the other side and probably holding the rRNA structure together. The combined cluster of proteins S8, S12 and S17 appears to hold together the shoulder and platform of the 30S subunit. In Nocardia farcinica (strain IFM 10152), this protein is Small ribosomal subunit protein uS12.